Reading from the N-terminus, the 1013-residue chain is Alpha-2-macroglobulin homolog (1013 aa).

Positions 804–844 (AQRGANGERDGLRETVPVRPAGARQLLSGSGSVGADKAGGN) are disordered.

Belongs to the protease inhibitor I39 (alpha-2-macroglobulin) family. Bacterial alpha-2-macroglobulin subfamily.

This is Alpha-2-macroglobulin homolog from Deinococcus radiodurans (strain ATCC 13939 / DSM 20539 / JCM 16871 / CCUG 27074 / LMG 4051 / NBRC 15346 / NCIMB 9279 / VKM B-1422 / R1).